The sequence spans 260 residues: Chlorocatechol 1,2-dioxygenase (260 aa).

4 residues coordinate Fe cation: Y130, Y164, H188, and H190.

Belongs to the intradiol ring-cleavage dioxygenase family. Fe(3+) serves as cofactor.

It catalyses the reaction 3-chlorocatechol + O2 = (2E,4Z)-2-chloromuconate + 2 H(+). The enzyme catalyses 3,5-dichlorocatechol + O2 = (2E,4E)-2,4-dichloromuconate + 2 H(+). Its pathway is aromatic compound metabolism; 3-chlorocatechol degradation. In terms of biological role, preferentially converts 3-chlorocatechol and 3,5-dichlorocatechol as opposed to other chlorinated catechols. Retains diminished activity toward non-chlorinated substrates. The sequence is that of Chlorocatechol 1,2-dioxygenase (clcA) from Pseudomonas putida (Arthrobacter siderocapsulatus).